The chain runs to 319 residues: Extracellular phospholipase A1 (319 aa).

An N-terminal signal peptide occupies residues 1–24 (MSMPLSFTSAVSPVAAIPTPRAAA).

It carries out the reaction a 1,2-diacyl-sn-glycero-3-phosphocholine + H2O = a 2-acyl-sn-glycero-3-phosphocholine + a fatty acid + H(+). The sequence is that of Extracellular phospholipase A1 (phlA) from Serratia liquefaciens.